We begin with the raw amino-acid sequence, 270 residues long: 4-hydroxy-tetrahydrodipicolinate reductase (270 aa).

Residues 9-14 (GAGGRM) and Glu-35 each bind NAD(+). Arg-36 serves as a coordination point for NADP(+). Residues 99–101 (GTT) and 123–126 (ASNF) contribute to the NAD(+) site. His-156 (proton donor/acceptor) is an active-site residue. His-157 is a binding site for (S)-2,3,4,5-tetrahydrodipicolinate. The Proton donor role is filled by Lys-160. 166–167 (GT) serves as a coordination point for (S)-2,3,4,5-tetrahydrodipicolinate.

This sequence belongs to the DapB family.

Its subcellular location is the cytoplasm. The enzyme catalyses (S)-2,3,4,5-tetrahydrodipicolinate + NAD(+) + H2O = (2S,4S)-4-hydroxy-2,3,4,5-tetrahydrodipicolinate + NADH + H(+). It carries out the reaction (S)-2,3,4,5-tetrahydrodipicolinate + NADP(+) + H2O = (2S,4S)-4-hydroxy-2,3,4,5-tetrahydrodipicolinate + NADPH + H(+). The protein operates within amino-acid biosynthesis; L-lysine biosynthesis via DAP pathway; (S)-tetrahydrodipicolinate from L-aspartate: step 4/4. Catalyzes the conversion of 4-hydroxy-tetrahydrodipicolinate (HTPA) to tetrahydrodipicolinate. This is 4-hydroxy-tetrahydrodipicolinate reductase from Haemophilus influenzae (strain 86-028NP).